The chain runs to 462 residues: Ribosomal protein uS12 methylthiotransferase RimO (462 aa).

Positions 22 to 133 (ASVAFLHLGC…IIEVLQRVRQ (112 aa)) constitute an MTTase N-terminal domain. [4Fe-4S] cluster-binding residues include Cys31, Cys67, Cys96, Cys171, Cys175, and Cys178. Residues 157–386 (TTGRFVSYLK…VAIQQPISAA (230 aa)) form the Radical SAM core domain. One can recognise a TRAM domain in the interval 389–460 (QALIGQTVDV…LYDLTGEINH (72 aa)).

The protein belongs to the methylthiotransferase family. RimO subfamily. [4Fe-4S] cluster serves as cofactor.

Its subcellular location is the cytoplasm. The catalysed reaction is L-aspartate(89)-[ribosomal protein uS12]-hydrogen + (sulfur carrier)-SH + AH2 + 2 S-adenosyl-L-methionine = 3-methylsulfanyl-L-aspartate(89)-[ribosomal protein uS12]-hydrogen + (sulfur carrier)-H + 5'-deoxyadenosine + L-methionine + A + S-adenosyl-L-homocysteine + 2 H(+). Its function is as follows. Catalyzes the methylthiolation of an aspartic acid residue of ribosomal protein uS12. The sequence is that of Ribosomal protein uS12 methylthiotransferase RimO from Prochlorococcus marinus (strain MIT 9211).